Here is a 130-residue protein sequence, read N- to C-terminus: UPF0102 protein SCO5602 (130 aa).

The protein belongs to the UPF0102 family.

The chain is UPF0102 protein SCO5602 from Streptomyces coelicolor (strain ATCC BAA-471 / A3(2) / M145).